The chain runs to 1012 residues: DNA polymerase catalytic subunit (1012 aa).

Belongs to the DNA polymerase type-B family.

The protein localises to the host nucleus. It carries out the reaction DNA(n) + a 2'-deoxyribonucleoside 5'-triphosphate = DNA(n+1) + diphosphate. This chain is DNA polymerase catalytic subunit (U38), found in Human herpesvirus 6A (strain Uganda-1102) (HHV-6 variant A).